Consider the following 807-residue polypeptide: Probable dimethyl sulfoxide reductase chain YnfF (807 aa).

The segment at residues 1–45 (MKIHTTEALMKAEISRRSLMKTSALGSLALASSAFTLPFSQMVRA) is a signal peptide (tat-type signal). One can recognise a 4Fe-4S Mo/W bis-MGD-type domain in the interval 52–113 (EKAVWSSCTV…SIRRRMNHPD (62 aa)). Residues Cys59, Cys63, Cys67, and Cys99 each coordinate [4Fe-4S] cluster. Ser195 contributes to the Mo-bis(molybdopterin guanine dinucleotide) binding site.

It belongs to the prokaryotic molybdopterin-containing oxidoreductase family. As to quaternary structure, the complex consists of three subunits: YnfF, the reductase; YnfG, an electron transfer protein, and YnfH, a membrane anchor protein. [4Fe-4S] cluster is required as a cofactor. Mo-bis(molybdopterin guanine dinucleotide) serves as cofactor. Exported by the Tat system. The position of the signal peptide cleavage has not been experimentally proven. Can also be exported by the Sec system.

Its subcellular location is the cell membrane. Its function is as follows. Terminal reductase during anaerobic growth on various sulfoxide and N-oxide compounds. The chain is Probable dimethyl sulfoxide reductase chain YnfF (ynfF) from Escherichia coli (strain K12).